We begin with the raw amino-acid sequence, 587 residues long: Protein NRT1/ PTR FAMILY 2.9 (587 aa).

Transmembrane regions (helical) follow at residues 35-55 (FEKLGIVGSSSNLVIYLTTVF), 65-85 (VVNIYGGTSNFGTIVAAFLCD), 94-114 (LSFAMIACFLGSVAMDLTAVI), 135-155 (IGQIMFLAGAMVLLVIGAGGI), 181-201 (FFNWYFFTFTFAQMVSLTLIV), 209-229 (WSIGLAIPAILMLLGCIIFFA), 325-345 (CVIRVLPVWLSAALFYLAYIQ), 368-388 (IPAGSYTVFLMLGMTIFIPIY), 412-432 (VGAGLFLCITSMMVSAIVEQY), 457-477 (GMWLIPQLVLMGIADALAGVG), 493-513 (FAGSLYYCGIGLASYLSTFLL), and 540-560 (YFYFLVAGMMTLNLAYFLLVS).

The protein belongs to the major facilitator superfamily. Proton-dependent oligopeptide transporter (POT/PTR) (TC 2.A.17) family. As to expression, expressed in roots, stems and major veins of the leaves. Detected in the companion cells of the root phloem.

The protein localises to the cell membrane. Low-affinity nitrate transporter facilitating nitrate loading into root phloem. Not involved in dipeptides transport, but has a weak glucosinolate transport activity. The protein is Protein NRT1/ PTR FAMILY 2.9 (NPF2.9) of Arabidopsis thaliana (Mouse-ear cress).